The sequence spans 189 residues: Threonylcarbamoyl-AMP synthase (189 aa).

The YrdC-like domain occupies 3–189 (TTSVTEAAEC…NALTGEVIRP (187 aa)).

It belongs to the SUA5 family. TsaC subfamily.

It is found in the cytoplasm. The enzyme catalyses L-threonine + hydrogencarbonate + ATP = L-threonylcarbamoyladenylate + diphosphate + H2O. In terms of biological role, required for the formation of a threonylcarbamoyl group on adenosine at position 37 (t(6)A37) in tRNAs that read codons beginning with adenine. Catalyzes the conversion of L-threonine, HCO(3)(-)/CO(2) and ATP to give threonylcarbamoyl-AMP (TC-AMP) as the acyladenylate intermediate, with the release of diphosphate. The sequence is that of Threonylcarbamoyl-AMP synthase from Acinetobacter baumannii (strain ACICU).